Reading from the N-terminus, the 39-residue chain is Larval cuticle protein SC6 (39 aa).

The Chitin-binding type R&amp;R domain maps to 15–39; sequence VDQFKYGLELDNSIKADQEGHLEGD.

Component of the cuticle of the larva of flesh fly. This chain is Larval cuticle protein SC6, found in Sarcophaga bullata (Grey flesh fly).